The following is a 657-amino-acid chain: uncharacterized protein (657 aa).

Catalysis depends on charge relay system residues S518 and H631.

Belongs to the peptidase S9C family.

This is an uncharacterized protein from Bacillus subtilis (strain 168).